A 379-amino-acid polypeptide reads, in one-letter code: Cytochrome b (379 aa).

4 consecutive transmembrane segments (helical) span residues 33 to 53 (FGSL…FLAM), 77 to 98 (WLIR…YLHI), 113 to 133 (WNIG…GYVL), and 178 to 198 (FFAF…LHLL). The heme b site is built by His83 and His97. Positions 182 and 196 each coordinate heme b. Residue His201 coordinates a ubiquinone. 4 helical membrane passes run 226-246 (YKDL…ALFY), 288-308 (LGGV…PILH), 320-340 (ISQL…WIGG), and 347-367 (YIII…VLNP).

Belongs to the cytochrome b family. As to quaternary structure, the cytochrome bc1 complex contains 3 respiratory subunits (MT-CYB, CYC1 and UQCRFS1), 2 core proteins (UQCRC1 and UQCRC2) and probably 6 low-molecular weight proteins. Heme b is required as a cofactor.

The protein resides in the mitochondrion inner membrane. Functionally, component of the ubiquinol-cytochrome c reductase complex (complex III or cytochrome b-c1 complex) that is part of the mitochondrial respiratory chain. The b-c1 complex mediates electron transfer from ubiquinol to cytochrome c. Contributes to the generation of a proton gradient across the mitochondrial membrane that is then used for ATP synthesis. The sequence is that of Cytochrome b (mt-cyb) from Anguilla mossambica (African longfin eel).